Consider the following 639-residue polypeptide: Protein sly1 homolog (639 aa).

A run of 4 repeats spans residues 85 to 121 (DENLDRIQQDFSSGLYDVYHLNFLAPITRSKIENLAA), 203 to 245 (RNSA…FSFQ), 423 to 460 (LDLLRDGEFGQAEDKLRLYIIYFICAQQLPESEQERLK), and 464 to 500 (QAAGCDLTALAYVQRWKGIMNRSPSISQATQYEGGGT). Residues 85-500 (DENLDRIQQD…QATQYEGGGT (416 aa)) form a 4 X approximate repeats region.

It belongs to the STXBP/unc-18/SEC1 family. In embryos, from stage 14, expression is seen in posterior midgut, esophagus and salivary glands. No expression is seen in larval imaginal disks.

It is found in the cytoplasm. Its subcellular location is the membrane. Its function is as follows. Non-vital for development. This Drosophila melanogaster (Fruit fly) protein is Protein sly1 homolog (Slh).